We begin with the raw amino-acid sequence, 78 residues long: Large ribosomal subunit protein bL28 (78 aa).

The protein belongs to the bacterial ribosomal protein bL28 family.

The chain is Large ribosomal subunit protein bL28 from Pectobacterium carotovorum subsp. carotovorum (strain PC1).